A 112-amino-acid polypeptide reads, in one-letter code: Nucleoid-associated protein FTM_1023 (112 aa).

Belongs to the YbaB/EbfC family. In terms of assembly, homodimer.

The protein localises to the cytoplasm. It is found in the nucleoid. Its function is as follows. Binds to DNA and alters its conformation. May be involved in regulation of gene expression, nucleoid organization and DNA protection. The sequence is that of Nucleoid-associated protein FTM_1023 from Francisella tularensis subsp. mediasiatica (strain FSC147).